We begin with the raw amino-acid sequence, 78 residues long: Defensin SD2 (78 aa).

Residues 1–20 (MKSSMKMFAALLLVVMCLLA) form the signal peptide. 4 disulfide bridges follow: cysteine 34–cysteine 78, cysteine 45–cysteine 65, cysteine 51–cysteine 72, and cysteine 55–cysteine 74.

Belongs to the DEFL family. As to expression, highest expression in flowers and to a lesser extent in leaves. Lower levels in hypocotyls. No expression in roots and cotyledons.

It is found in the secreted. Its subcellular location is the cell wall. Functionally, may play a protective role in flowers by protecting the reproductive organs from potential pathogen attack. The chain is Defensin SD2 (SD2) from Helianthus annuus (Common sunflower).